The primary structure comprises 77 residues: Cell division topological specificity factor (77 aa).

This sequence belongs to the MinE family.

Functionally, prevents the cell division inhibition by proteins MinC and MinD at internal division sites while permitting inhibition at polar sites. This ensures cell division at the proper site by restricting the formation of a division septum at the midpoint of the long axis of the cell. In Helicobacter acinonychis (strain Sheeba), this protein is Cell division topological specificity factor.